Reading from the N-terminus, the 163-residue chain is Small ribosomal subunit protein uS9 (163 aa).

The interval 1–41 (MAENTNDSAVLETEEELTSYTTETNAGAGTGTSTIAPGYGT) is disordered. Positions 18 to 38 (TSYTTETNAGAGTGTSTIAPG) are enriched in low complexity.

Belongs to the universal ribosomal protein uS9 family.

The chain is Small ribosomal subunit protein uS9 from Bifidobacterium adolescentis (strain ATCC 15703 / DSM 20083 / NCTC 11814 / E194a).